Here is a 455-residue protein sequence, read N- to C-terminus: Xylan O-acetyltransferase 3 (455 aa).

A compositionally biased stretch (low complexity) spans 1 to 15 (MSKPQQQSPPSTTTT). A disordered region spans residues 1–32 (MSKPQQQSPPSTTTTSPPPPPPSTPPPASSSR). Topologically, residues 1-42 (MSKPQQQSPPSTTTTSPPPPPPSTPPPASSSRSLLSALRRSP) are cytoplasmic. The segment covering 16 to 28 (SPPPPPPSTPPPA) has biased composition (pro residues). A helical; Signal-anchor for type II membrane protein membrane pass occupies residues 43-59 (VTTLVAAFFLLALFMYG). At 60–455 (EDVRTLAELS…PSTHPSLPPQ (396 aa)) the chain is on the lumenal side. Asn82, Asn107, and Asn146 each carry an N-linked (GlcNAc...) asparagine glycan. Disulfide bonds link Cys96–Cys147, Cys118–Cys183, Cys127–Cys423, and Cys339–Cys419. The GDS motif signature appears at 170 to 172 (GDS). The active-site Nucleophile is Ser172. N-linked (GlcNAc...) asparagine glycosylation is found at Asn278 and Asn348. Asp418 functions as the Proton donor in the catalytic mechanism. Positions 418-421 (DCIH) match the DXXH motif motif. Catalysis depends on His421, which acts as the Proton acceptor.

The protein belongs to the PC-esterase family. TBL subfamily. As to expression, highly expressed in leaves. Expressed in roots, stems and inflorescences.

The protein resides in the golgi apparatus membrane. In terms of biological role, xylan acetyltransferase required for 2-O- and 3-O-monoacetylation of xylosyl residues in xylan. Catalyzes the 2-O-acetylation of xylan, followed by nonenzymatic acetyl migration to the O-3 position, resulting in products that are monoacetylated at both O-2 and O-3 positions. The polypeptide is Xylan O-acetyltransferase 3 (Oryza sativa subsp. japonica (Rice)).